The following is a 205-amino-acid chain: Protein GrpE (205 aa).

A disordered region spans residues 172 to 205 (KGSTGPGAPAEPAAAPNPYASNGADTGGSFDTKA). Over residues 177–195 (PGAPAEPAAAPNPYASNGA) the composition is skewed to low complexity.

The protein belongs to the GrpE family. In terms of assembly, homodimer.

Its subcellular location is the cytoplasm. Its function is as follows. Participates actively in the response to hyperosmotic and heat shock by preventing the aggregation of stress-denatured proteins, in association with DnaK and GrpE. It is the nucleotide exchange factor for DnaK and may function as a thermosensor. Unfolded proteins bind initially to DnaJ; upon interaction with the DnaJ-bound protein, DnaK hydrolyzes its bound ATP, resulting in the formation of a stable complex. GrpE releases ADP from DnaK; ATP binding to DnaK triggers the release of the substrate protein, thus completing the reaction cycle. Several rounds of ATP-dependent interactions between DnaJ, DnaK and GrpE are required for fully efficient folding. The chain is Protein GrpE from Caulobacter sp. (strain K31).